The primary structure comprises 468 residues: Na(+)/H(+) antiporter NhaA 2 (468 aa).

Helical transmembrane passes span 31 to 51, 82 to 102, 118 to 138, 147 to 167, 176 to 196, 199 to 219, 226 to 246, 321 to 341, 353 to 373, 393 to 413, and 422 to 442; these read FLHV…VALA, LHFW…GLEI, VLPV…YLAL, GWGV…ALLG, VLLL…IAVF, SSIS…VLAL, SPVV…SAGV, PWVA…VSLG, LLLG…MVAC, VLVV…VAGL, and GVAK…AMAV.

This sequence belongs to the NhaA Na(+)/H(+) (TC 2.A.33) antiporter family.

It localises to the cell inner membrane. It carries out the reaction Na(+)(in) + 2 H(+)(out) = Na(+)(out) + 2 H(+)(in). In terms of biological role, na(+)/H(+) antiporter that extrudes sodium in exchange for external protons. The chain is Na(+)/H(+) antiporter NhaA 2 from Sorangium cellulosum (strain So ce56) (Polyangium cellulosum (strain So ce56)).